A 634-amino-acid polypeptide reads, in one-letter code: Alpha-L-iduronidase (634 aa).

The signal sequence occupies residues 1-16; it reads MLTFFAAFLAAPLALA. Residues P44, L46, and H48 each coordinate alpha-D-mannopyranose. Position 81 (H81) interacts with alpha-L-iduronate. N100 carries an N-linked (GlcNAc...) asparagine glycan. Alpha-L-iduronate-binding residues include N171 and E172. E172 serves as the catalytic Proton donor. N180 and N233 each carry an N-linked (GlcNAc...) asparagine glycan. Positions 254, 289, and 295 each coordinate alpha-L-iduronate. E289 functions as the Nucleophile in the catalytic mechanism. W296 contributes to the alpha-D-mannopyranose binding site. N-linked (GlcNAc...) asparagine glycosylation is present at N326. Positions 339 and 353 each coordinate alpha-L-iduronate. 3 N-linked (GlcNAc...) asparagine glycosylation sites follow: N362, N405, and N441. The cysteines at positions 531 and 567 are disulfide-linked.

The protein belongs to the glycosyl hydrolase 39 family. Monomer. In terms of processing, N-glycosylation contributes to substrate binding and is required for full enzymatic activity. As to expression, ubiquitous.

Its subcellular location is the lysosome. It carries out the reaction Hydrolysis of unsulfated alpha-L-iduronosidic linkages in dermatan sulfate.. The protein is Alpha-L-iduronidase (Idua) of Mus musculus (Mouse).